The chain runs to 328 residues: MQNSPTEYLKPRVVDVDVISPVRARVTLEPMERGFGYTLGNALRRVLLSSIPGFAITEVKIDGVVHEYSTLDGVQEDVVDILLNLKGVALKLNSKNEATLTLNKSTEGVVTAGDFDTGHDAEIANPDHVIAHLTKGGKLNLEVKVEMGRGYQPVPQRRKTEDEDRVLGFIQVDASFSPISKVSYQVESARVEQRTDLDKLIMDVETNGIIEPEQAIRDAARILMGQLSVFADLEGAPSEVEVKQAPQVDPILLRPVDDLELTVRSANCLKAENIYYIGDLIQRTENELLKAPNLGRKSLNEIKDVLASKGLTLGMKLENWPPAGLEKV.

The interval 1 to 234 is alpha N-terminal domain (alpha-NTD); it reads MQNSPTEYLK…GQLSVFADLE (234 aa). The alpha C-terminal domain (alpha-CTD) stretch occupies residues 248-328; that stretch reads VDPILLRPVD…NWPPAGLEKV (81 aa).

This sequence belongs to the RNA polymerase alpha chain family. In terms of assembly, homodimer. The RNAP catalytic core consists of 2 alpha, 1 beta, 1 beta' and 1 omega subunit. When a sigma factor is associated with the core the holoenzyme is formed, which can initiate transcription.

The catalysed reaction is RNA(n) + a ribonucleoside 5'-triphosphate = RNA(n+1) + diphosphate. DNA-dependent RNA polymerase catalyzes the transcription of DNA into RNA using the four ribonucleoside triphosphates as substrates. This chain is DNA-directed RNA polymerase subunit alpha, found in Methylobacillus flagellatus (strain ATCC 51484 / DSM 6875 / VKM B-1610 / KT).